The following is a 307-amino-acid chain: Small ribosomal subunit biogenesis GTPase RsgA (307 aa).

One can recognise a CP-type G domain in the interval 80-237 (KADLRQTIVS…IVDTPGIKEF (158 aa)). Residues 129-132 (NKID) and 180-188 (GQSGVGKSS) each bind GTP. Zn(2+) is bound by residues C261, C266, H268, and C274.

It belongs to the TRAFAC class YlqF/YawG GTPase family. RsgA subfamily. Monomer. Associates with 30S ribosomal subunit, binds 16S rRNA. It depends on Zn(2+) as a cofactor.

The protein resides in the cytoplasm. Its function is as follows. One of several proteins that assist in the late maturation steps of the functional core of the 30S ribosomal subunit. Helps release RbfA from mature subunits. May play a role in the assembly of ribosomal proteins into the subunit. Circularly permuted GTPase that catalyzes slow GTP hydrolysis, GTPase activity is stimulated by the 30S ribosomal subunit. This is Small ribosomal subunit biogenesis GTPase RsgA from Borreliella afzelii (strain PKo) (Borrelia afzelii).